Reading from the N-terminus, the 424-residue chain is 3-oxo-tetronate kinase (424 aa).

ATP contacts are provided by residues Ser-264, 363–366, and Gly-408; that span reads GGET.

This sequence belongs to the four-carbon acid sugar kinase family.

The catalysed reaction is 3-dehydro-L-erythronate + ATP = 3-dehydro-4-O-phospho-L-erythronate + ADP + H(+). It catalyses the reaction 3-dehydro-D-erythronate + ATP = 3-dehydro-4-O-phospho-D-erythronate + ADP + H(+). Its function is as follows. Catalyzes the ATP-dependent phosphorylation of 3-oxo-tetronate to 3-oxo-tetronate 4-phosphate. The protein is 3-oxo-tetronate kinase of Methylobacterium radiotolerans (strain ATCC 27329 / DSM 1819 / JCM 2831 / NBRC 15690 / NCIMB 10815 / 0-1).